The sequence spans 374 residues: Dispase autolysis-inducing protein (374 aa).

The signal sequence occupies residues 1-26 (MKRMGWAVTAAVTTIVLAQSSLAAQA).

Its subcellular location is the secreted. Functionally, induces autolysis of dispase and thermolysin. The protein is Dispase autolysis-inducing protein (daip) of Streptomyces mobaraensis (Streptoverticillium mobaraense).